A 178-amino-acid polypeptide reads, in one-letter code: Cytochrome b6-f complex iron-sulfur subunit (178 aa).

The chain crosses the membrane as a helical span at residues L20–M42. The region spanning N71 to V161 is the Rieske domain. C107, H109, C125, and H128 together coordinate [2Fe-2S] cluster. An intrachain disulfide couples C112 to C127.

This sequence belongs to the Rieske iron-sulfur protein family. In terms of assembly, the 4 large subunits of the cytochrome b6-f complex are cytochrome b6, subunit IV (17 kDa polypeptide, PetD), cytochrome f and the Rieske protein, while the 4 small subunits are PetG, PetL, PetM and PetN. The complex functions as a dimer. Requires [2Fe-2S] cluster as cofactor.

Its subcellular location is the cellular thylakoid membrane. It carries out the reaction 2 oxidized [plastocyanin] + a plastoquinol + 2 H(+)(in) = 2 reduced [plastocyanin] + a plastoquinone + 4 H(+)(out). Functionally, component of the cytochrome b6-f complex, which mediates electron transfer between photosystem II (PSII) and photosystem I (PSI), cyclic electron flow around PSI, and state transitions. The polypeptide is Cytochrome b6-f complex iron-sulfur subunit (Prochlorococcus marinus (strain MIT 9211)).